A 152-amino-acid chain; its full sequence is Large ribosomal subunit protein bL9 (152 aa).

Belongs to the bacterial ribosomal protein bL9 family.

Binds to the 23S rRNA. The chain is Large ribosomal subunit protein bL9 from Prochlorococcus marinus (strain MIT 9313).